The chain runs to 375 residues: Protein NDRG3 (375 aa).

The disordered stretch occupies residues 326–375 (RSRTHSASSSGSMEIPRSRSHTSNAQLKSSSNNSLSNQIQETPQTIELSC). Over residues 348–363 (SNAQLKSSSNNSLSNQ) the composition is skewed to low complexity. The span at 364–375 (IQETPQTIELSC) shows a compositional bias: polar residues.

The protein belongs to the NDRG family.

The chain is Protein NDRG3 from Xenopus laevis (African clawed frog).